Consider the following 584-residue polypeptide: Pentatricopeptide repeat-containing protein At2g01510, mitochondrial (584 aa).

A mitochondrion-targeting transit peptide spans 1-20 (MLAKQTPLTKQMLSELLRAS). PPR repeat units lie at residues 73–107 (RIFL…GVRP), 108–142 (DEFT…GFGC), 143–173 (LGIV…MQVK), 174–208 (DLVA…AVQF), 209–243 (DSFT…EIDC), 244–274 (NIIV…MKQR), 275–309 (NVVS…GLRP), 310–344 (NYVT…NDKN), and 348–378 (RKEH…MPVE). The segment at 383-458 (IWGALLGACA…VAAYSSVEFE (76 aa)) is type E motif. The interval 459-489 (GKIHFFNRGDKSHPQSKAIYEKLDEILKKIR) is type E(+) motif. Residues 490-584 (KMGYVPDTCS…NGVCSCKEFW (95 aa)) are type DYW motif.

Belongs to the PPR family. PCMP-H subfamily.

It is found in the mitochondrion. The protein is Pentatricopeptide repeat-containing protein At2g01510, mitochondrial (PCMP-H37) of Arabidopsis thaliana (Mouse-ear cress).